A 143-amino-acid chain; its full sequence is MVKPPLRCQGGQVARGHRALSIALKTEDLVGGLSITKDRGDRDDGRYGEPRIQRKPGQLTANDPVAYDFVRHVASVSTRDLKVGVVDGQRIPVRFAHDKSAAWAKDTPGLCKCLGRVRHVLEHAVGPGTVDAAVLERERVDIA.

The disordered stretch occupies residues 35 to 59; sequence ITKDRGDRDDGRYGEPRIQRKPGQL. Residues 36–52 are compositionally biased toward basic and acidic residues; it reads TKDRGDRDDGRYGEPRI.

This is an uncharacterized protein from Streptomyces fradiae (Streptomyces roseoflavus).